The primary structure comprises 37 residues: Large ribosomal subunit protein bL36c (37 aa).

Belongs to the bacterial ribosomal protein bL36 family.

It localises to the plastid. The protein resides in the chloroplast. This is Large ribosomal subunit protein bL36c from Stigeoclonium helveticum (Green alga).